We begin with the raw amino-acid sequence, 97 residues long: Single insulin-like growth factor-binding domain protein-1 (97 aa).

A signal peptide spans 1–19 (MKTLFVFAVGIMLSMRASA). The IGFBP N-terminal domain occupies 20–96 (FTCPECRPEL…PEIVGTCVKI (77 aa)). Thr-21 carries O-linked (GalNAc...) threonine glycosylation. 6 cysteine pairs are disulfide-bonded: Cys-22/Cys-45, Cys-25/Cys-47, Cys-30/Cys-48, Cys-36/Cys-51, Cys-59/Cys-75, and Cys-69/Cys-93.

In terms of tissue distribution, expressed in hemocytes.

The protein resides in the secreted. Functionally, has a role in the innate immune system. The protein is Single insulin-like growth factor-binding domain protein-1 of Cupiennius salei (American wandering spider).